Reading from the N-terminus, the 104-residue chain is Small ribosomal subunit protein bS16 (104 aa).

The protein belongs to the bacterial ribosomal protein bS16 family.

The polypeptide is Small ribosomal subunit protein bS16 (Wolbachia pipientis subsp. Culex pipiens (strain wPip)).